Here is an 808-residue protein sequence, read N- to C-terminus: Sucrose synthase 2 (808 aa).

S10 carries the phosphoserine; by CPK modification. Residues M272–T749 form a GT-B glycosyltransferase region.

Belongs to the glycosyltransferase 1 family. Plant sucrose synthase subfamily. Homotetramer or heterotetramer with SUS1. Phosphorylated at Ser-10 by CPK23 in developing seeds. Predominantly expressed in the leaf tissues. Expressed in seeds, and at lower levels in roots. Expressed in leaf mesophyll and phloem (at protein level).

It carries out the reaction an NDP-alpha-D-glucose + D-fructose = a ribonucleoside 5'-diphosphate + sucrose + H(+). With respect to regulation, activated by phosphorylation at Ser-10 by CPK23. In terms of biological role, sucrose-cleaving enzyme that provides UDP-glucose and fructose for various metabolic pathways. Functions in developing seeds by supplying substrates for the biosynthesis of storage products. This is Sucrose synthase 2 (SUS2) from Oryza sativa subsp. japonica (Rice).